The chain runs to 581 residues: Phosphatidylinositol N-acetylglucosaminyltransferase subunit Q (581 aa).

The next 5 helical transmembrane spans lie at 276 to 298 (ANML…WLHS), 344 to 366 (LGRF…SPFI), 381 to 403 (LTVA…YCFY), 446 to 468 (LFIG…LYYL), and 478 to 500 (ITVQ…YSLG).

The protein belongs to the PIGQ family. Component of the glycosylphosphatidylinositol-N-acetylglucosaminyltransferase (GPI-GnT) complex composed at least by PIGA, PIGC, PIGH, PIGP, PIGQ, PIGY and DPM2. Interacts with PIGA, PIGH and PIGC.

It localises to the membrane. It participates in glycolipid biosynthesis; glycosylphosphatidylinositol-anchor biosynthesis. In terms of biological role, part of the glycosylphosphatidylinositol-N-acetylglucosaminyltransferase (GPI-GnT) complex that catalyzes the transfer of N-acetylglucosamine from UDP-N-acetylglucosamine to phosphatidylinositol and participates in the first step of GPI biosynthesis. The polypeptide is Phosphatidylinositol N-acetylglucosaminyltransferase subunit Q (Mus musculus (Mouse)).